The following is a 2388-amino-acid chain: Spectrin beta chain, non-erythrocytic 2 (2388 aa).

S2 is modified (N-acetylserine). The segment at 2–278 (SSTLSPTDFD…IITYVATYYH (277 aa)) is actin-binding. Phosphoserine occurs at positions 6 and 31. Calponin-homology (CH) domains follow at residues 57 to 161 (AVQK…LRFQ) and 176 to 281 (KSAK…HYFS). Spectrin repeat units follow at residues 306-414 (LVEK…LALR), 427-527 (AARF…RERL), 532-639 (ELQK…RLEE), 642-744 (RLWR…QRLA), 749-849 (LYQF…RALE), and 856-954 (TMLS…KAAL). S959 bears the Phosphoserine mark. Spectrin repeat units lie at residues 960 to 1063 (IQNY…SLGE), 1066 to 1169 (RLQD…GRLA), 1174 to 1266 (FQGF…NQEA), 1279 to 1379 (EQQH…ARSL), 1384 to 1485 (RAEL…RRLQ), 1489 to 1586 (EQHQ…RLEE), 1589 to 1692 (RAQQ…RLQE), 1696 to 1797 (LCQL…GQVL), 1801 to 1904 (YELQ…QLLL), 1910 to 2010 (FRFF…DWLQ), and 2017 to 2078 (VFGR…LTAL). S1073 is subject to Phosphoserine. At S1574 the chain carries Phosphoserine. Residues 2080-2096 (ERENEQKRKREEEERRK) are compositionally biased toward basic and acidic residues. Disordered stretches follow at residues 2080-2112 (EREN…EGSL) and 2124-2207 (DGTQ…HVAT). Residues 2124 to 2163 (DGTQSKLPPSTQAPSINGVCTDTESSQPLLEQQRLEQSNV) are compositionally biased toward polar residues. Residues S2169 and S2199 each carry the phosphoserine modification. The PH domain occupies 2218 to 2328 (QEQMEGTLCR…WLRVVNAAIA (111 aa)). The interval 2333-2388 (ASGEPEEPVVPSASRGLTRAMTMPPVSQPEGSIVLRSKDGREREREKRFSFFKKNK) is disordered. Phosphothreonine is present on T2354. Residue S2359 is modified to Phosphoserine. Over residues 2368–2381 (RSKDGREREREKRF) the composition is skewed to basic and acidic residues.

The protein belongs to the spectrin family. Abundantly transcribed in the brain. Neurons are the predominant cell-type to express the gene. Found abundantly in Purkinje cells.

The protein resides in the cytoplasm. The protein localises to the cytoskeleton. It is found in the cell cortex. Its function is as follows. Probably plays an important role in neuronal membrane skeleton. The sequence is that of Spectrin beta chain, non-erythrocytic 2 (Sptbn2) from Rattus norvegicus (Rat).